The primary structure comprises 423 residues: Serine hydroxymethyltransferase 2 (423 aa).

Residues Leu-121 and 125–127 (GHL) each bind (6S)-5,6,7,8-tetrahydrofolate. Lys-230 carries the N6-(pyridoxal phosphate)lysine modification. (6S)-5,6,7,8-tetrahydrofolate is bound at residue 356-358 (SPF).

It belongs to the SHMT family. In terms of assembly, homodimer. Pyridoxal 5'-phosphate is required as a cofactor.

It is found in the cytoplasm. It carries out the reaction (6R)-5,10-methylene-5,6,7,8-tetrahydrofolate + glycine + H2O = (6S)-5,6,7,8-tetrahydrofolate + L-serine. It functions in the pathway one-carbon metabolism; tetrahydrofolate interconversion. Its pathway is amino-acid biosynthesis; glycine biosynthesis; glycine from L-serine: step 1/1. Its function is as follows. Catalyzes the reversible interconversion of serine and glycine with tetrahydrofolate (THF) serving as the one-carbon carrier. This reaction serves as the major source of one-carbon groups required for the biosynthesis of purines, thymidylate, methionine, and other important biomolecules. Also exhibits THF-independent aldolase activity toward beta-hydroxyamino acids, producing glycine and aldehydes, via a retro-aldol mechanism. The chain is Serine hydroxymethyltransferase 2 from Pectobacterium atrosepticum (strain SCRI 1043 / ATCC BAA-672) (Erwinia carotovora subsp. atroseptica).